A 221-amino-acid chain; its full sequence is Pleckstrin homology domain-containing family B member 2 (221 aa).

One can recognise a PH domain in the interval 2–109 (AFVKSGWLLR…WKFTLQDSRT (108 aa)). Position 20 (lysine 20) interacts with a 1,2-diacyl-sn-glycero-3-phospho-L-serine.

As to expression, highly expressed in brain, retina, heart and kidney. Detected at lower levels in lung, muscle and nerve.

It is found in the recycling endosome membrane. Functionally, involved in retrograde transport of recycling endosomes. The sequence is that of Pleckstrin homology domain-containing family B member 2 (Plekhb2) from Mus musculus (Mouse).